We begin with the raw amino-acid sequence, 167 residues long: Phospholipase A2 imperatoxin-1 (167 aa).

Ca(2+) contacts are provided by Trp38, Gly40, and Gly42. Cystine bridges form between Cys39–Cys61, Cys60–Cys99, Cys67–Cys92, Cys90–Cys127, and Cys132–Cys144. Residue His64 is part of the active site. Asp65 contributes to the Ca(2+) binding site. A glycan (N-linked (GlcNAc...) asparagine) is linked at Asn102. Residues 136 to 140 constitute a propeptide that is removed on maturation; the sequence is RRLAR.

The protein belongs to the phospholipase A2 family. Group III subfamily. Heterodimer composed of a large subunit and a small subunit; disulfide-linked. Requires Ca(2+) as cofactor. In terms of tissue distribution, expressed by the venom gland.

It localises to the secreted. It catalyses the reaction a 1,2-diacyl-sn-glycero-3-phosphocholine + H2O = a 1-acyl-sn-glycero-3-phosphocholine + a fatty acid + H(+). Phospholipase toxin, which may catalyze the calcium-dependent hydrolysis of the 2-acyl groups in 3-sn-phosphoglycerides. Inhibits both skeletal (RYR1) and cardiac (RYR2) ryanodine receptors (calcium release channels). Probably blocks ryanodine receptors by generating a lipid product. This is Phospholipase A2 imperatoxin-1 from Pandinus imperator (Emperor scorpion).